Reading from the N-terminus, the 243-residue chain is Nuclear cap-binding protein subunit 2 (243 aa).

MRNA contacts are provided by residues Y14, Y37, 106–110 (RVDFD), 117–121 (RQWGR), and 127–128 (QV). Positions 34–112 (VTVYVGNMSF…RPIRVDFDWG (79 aa)) constitute an RRM domain. Disordered regions lie at residues 120 to 144 (GRGRSGGQVRDEYRTDYDPGRGGYG) and 161 to 243 (GGAF…RRRR). 2 stretches are compositionally biased toward basic and acidic residues: residues 128-138 (VRDEYRTDYDP) and 173-228 (DRGD…REKG).

This sequence belongs to the RRM NCBP2 family. As to quaternary structure, component of the nuclear cap-binding complex (CBC), a heterodimer composed of ABH1/CBP80 and CBP20 that interacts with m7GpppG-capped RNA.

The protein localises to the nucleus. Its subcellular location is the cytoplasm. In terms of biological role, component of the cap-binding complex (CBC), which binds co-transcriptionally to the 5' cap of pre-mRNAs and is involved in various processes such as pre-mRNA splicing and RNA-mediated gene silencing (RNAi) by microRNAs (miRNAs). The CBC complex is involved in miRNA-mediated RNA interference and is required for primary miRNA processing. In the CBC complex, CBP20 recognizes and binds capped RNAs (m7GpppG-capped RNA) but requires ABH1/CBP80 to stabilize the movement of its N-terminal loop and lock the CBC into a high affinity cap-binding state with the cap structure. CBP20 also plays a role in stabilization of ABH1/CBP80 and ABH1/CBP80 localization to the nucleus. The sequence is that of Nuclear cap-binding protein subunit 2 (CBP20) from Oryza sativa subsp. japonica (Rice).